A 344-amino-acid polypeptide reads, in one-letter code: Small neutral protease regulatory protein (344 aa).

The HTH lysR-type domain occupies 1 to 60 (MELEVRHLRALCAIADAGSLHRAARRLGVAQPTLSTQLTRIEQALGGPLFTRERTGCRPT). The H-T-H motif DNA-binding region spans 20-39 (LHRAARRLGVAQPTLSTQLT). Positions 322 to 344 (SCGRAEGSRSRRPRDVAPPRPIG) are disordered. Residues 327–338 (EGSRSRRPRDVA) are compositionally biased toward basic and acidic residues.

This sequence belongs to the LysR transcriptional regulatory family.

Its function is as follows. Transcriptional activator of the gene (snpA) for the small neutral protease. This chain is Small neutral protease regulatory protein (mprR), found in Streptomyces lividans.